The primary structure comprises 374 residues: Ribosomal RNA large subunit methyltransferase G (374 aa).

It belongs to the methyltransferase superfamily. RlmG family.

The protein localises to the cytoplasm. The enzyme catalyses guanosine(1835) in 23S rRNA + S-adenosyl-L-methionine = N(2)-methylguanosine(1835) in 23S rRNA + S-adenosyl-L-homocysteine + H(+). Functionally, specifically methylates the guanine in position 1835 (m2G1835) of 23S rRNA. The protein is Ribosomal RNA large subunit methyltransferase G of Pseudomonas savastanoi pv. phaseolicola (strain 1448A / Race 6) (Pseudomonas syringae pv. phaseolicola (strain 1448A / Race 6)).